Here is a 325-residue protein sequence, read N- to C-terminus: Beta-1,3-galactosyltransferase brn (325 aa).

At 1 to 7 the chain is on the cytoplasmic side; sequence MQSKHRK. Residues 8-28 form a helical; Signal-anchor for type II membrane protein membrane-spanning segment; that stretch reads LLLRCLLVLPLILLVDYCGLL. Residues 29–325 lie on the Lumenal side of the membrane; that stretch reads THLHELNFER…WNECRSANYA (297 aa). Residues N149 and N166 are each glycosylated (N-linked (GlcNAc...) asparagine).

Belongs to the glycosyltransferase 31 family.

The protein localises to the golgi apparatus membrane. The enzyme catalyses a ganglioside GM2 (d18:1(4E)) + UDP-alpha-D-galactose = a ganglioside GM1 (d18:1(4E)) + UDP + H(+). In terms of biological role, neurogenic protein essential for the development and maintenance of epithelial structure. Required in the germline for establishing the follicular epithelium and for determining the dorsal-ventral polarity. Collaborates with Notch on the apical surface of follicle cells to mediate germline-follicle cell adhesion. Brn has a role in chorion formation. This is Beta-1,3-galactosyltransferase brn (brn) from Drosophila melanogaster (Fruit fly).